The sequence spans 89 residues: MTTSQKHRDFVAEPMGEKPVGSLAGIGDVLSKRLEERGFDKAYVVLGQFLVLKKDEDLFREWLKDTCGANAKQSRDCFGCLREWCDAFL.

Met1 is modified (N-acetylmethionine). Residue Thr2 is modified to N-acetylthreonine; in Barrier-to-autointegration factor, N-terminally processed. Residues Thr2 and Thr3 each carry the phosphothreonine; by VRK1 and VRK2 modification. Ser4 is subject to Phosphoserine; by VRK1 and VRK2. Positions 20-35 (VGSLAGIGDVLSKRLE) constitute a HhH domain.

Belongs to the BAF family. In terms of assembly, homodimer. Heterodimerizes with BANF2. Interacts with ANKLE2/LEM4, leading to decreased phosphorylation by VRK1 and promoting dephosphorylation by protein phosphatase 2A (PP2A). Binds non-specifically to double-stranded DNA, and is found as a hexamer or dodecamer upon DNA binding. Binds to LEM domain-containing nuclear proteins such as LEMD3/MAN1, TMPO/LAP2 and EMD (emerin). Interacts with ANKLE1 (via LEM domain); the interaction may favor BANF1 dimerization. Interacts with CRX and LMNA (lamin-A). Binds linker histone H1.1 and core histones H3. Interacts with LEMD2 (via LEM domain). Interacts with PARP1; interaction takes place in response to oxidative DNA damage. Post-translationally, ser-4 is the major site of phosphorylation as compared to Thr-2 and Thr-3. Phosphorylation on Thr-2; Thr-3 and Ser-4 disrupts its ability to bind DNA and reduces its ability to bind LEM domain-containing proteins. Non phosphorylated BAF seems to enhance binding between EMD and LMNA. Dephosphorylated by protein phosphatase 2A (PP2A) following interaction with ANKLE2/LEM4 during mitotic exit, leading to mitotic nuclear envelope reassembly.

The protein resides in the nucleus. The protein localises to the chromosome. Its subcellular location is the nucleus envelope. It localises to the cytoplasm. Non-specific DNA-binding protein that plays key roles in mitotic nuclear reassembly, chromatin organization, DNA damage response, gene expression and intrinsic immunity against foreign DNA. Contains two non-specific double-stranded DNA (dsDNA)-binding sites which promote DNA cross-bridging. Plays a key role in nuclear membrane reformation at the end of mitosis by driving formation of a single nucleus in a spindle-independent manner. Transiently cross-bridges anaphase chromosomes via its ability to bridge distant DNA sites, leading to the formation of a dense chromatin network at the chromosome ensemble surface that limits membranes to the surface. Also acts as a negative regulator of innate immune activation by restricting CGAS activity toward self-DNA upon acute loss of nuclear membrane integrity. Outcompetes CGAS for DNA-binding, thereby preventing CGAS activation and subsequent damaging autoinflammatory responses. Also involved in DNA damage response: interacts with PARP1 in response to oxidative stress, thereby inhibiting the ADP-ribosyltransferase activity of PARP1. Involved in the recognition of exogenous dsDNA in the cytosol: associates with exogenous dsDNA immediately after its appearance in the cytosol at endosome breakdown and is required to avoid autophagy. This Mus musculus (Mouse) protein is Barrier-to-autointegration factor.